Reading from the N-terminus, the 202-residue chain is AFG2-interacting ribosome maturation factor (202 aa).

Part of the 55LCC heterohexameric ATPase complex. Does not associate with pre-60S ribosomal particles.

It is found in the nucleus. The protein localises to the cytoplasm. Its function is as follows. Part of the 55LCC heterohexameric ATPase complex which is chromatin-associated and promotes replisome proteostasis to maintain replication fork progression and genome stability. Required for replication fork progression, sister chromatid cohesion, and chromosome stability. The ATPase activity is specifically enhanced by replication fork DNA and is coupled to cysteine protease-dependent cleavage of replisome substrates in response to replication fork damage. Uses ATPase activity to process replisome substrates in S-phase, facilitating their proteolytic turnover from chromatin to ensure DNA replication and mitotic fidelity. Involved in the cytoplasmic maturation steps of pre-60S ribosomal particles by promoting the release of shuttling protein RSL24D1/RLP24 from the pre-ribosomal particles. Plays an essential role in early embryonic development. The protein is AFG2-interacting ribosome maturation factor (airim) of Danio rerio (Zebrafish).